The chain runs to 250 residues: Small ribosomal subunit protein uS2 (250 aa).

The protein belongs to the universal ribosomal protein uS2 family.

The protein is Small ribosomal subunit protein uS2 of Delftia acidovorans (strain DSM 14801 / SPH-1).